We begin with the raw amino-acid sequence, 243 residues long: uncharacterized protein (243 aa).

The protein belongs to the methyltransferase superfamily.

This is an uncharacterized protein from Mycobacterium tuberculosis (strain CDC 1551 / Oshkosh).